A 484-amino-acid chain; its full sequence is Muscarinic acetylcholine receptor M4 (484 aa).

At 1-32 (MENDTWENESSASNHSIDETIVEIPGKYQTME) the chain is on the extracellular side. N-linked (GlcNAc...) asparagine glycans are attached at residues N3, N8, and N14. The chain crosses the membrane as a helical span at residues 33–55 (MIFIATVTGSLSLVTVVGNILVM). The Cytoplasmic segment spans residues 56–69 (LSIKVNRQLQTVNN). A helical transmembrane segment spans residues 70-90 (YFLFSLACADLIIGVFSMNLY). Residues 91–107 (SLYIIKGYWPLGPIVCD) are Extracellular-facing. C106 and C186 form a disulfide bridge. A helical membrane pass occupies residues 108 to 129 (LWLALDYVVSNASVMNLLIISL). Over 130–149 (ERXFCVTKPLTYPARRTTKM) the chain is Cytoplasmic. The chain crosses the membrane as a helical span at residues 150 to 172 (AGLMIAAAWLLSFELWAPAILFW). At 173 to 194 (QFIVGQRTVPSGECYIQFLSNP) the chain is on the extracellular side. The helical transmembrane segment at 195–217 (AVTFGTAIAAFYLPVVIMTILYI) threads the bilayer. The Cytoplasmic portion of the chain corresponds to 218–406 (HISLASRSRV…AAREKKVTRT (189 aa)). The disordered stretch occupies residues 255 to 316 (NIPKQDAGDK…EKQPLSEASS (62 aa)). A compositionally biased stretch (basic and acidic residues) spans 260-270 (DAGDKVVEKKN). A helical membrane pass occupies residues 407–427 (IFAILLAFIITWTPYNVMVLI). Over 428–441 (NTFCQTCIPETIWY) the chain is Extracellular. The helical transmembrane segment at 442 to 461 (IGYWLCYVNSTINPACYALC) threads the bilayer. Residues 462 to 484 (NATFKKTFKHLLMCQYKSIGTAR) lie on the Cytoplasmic side of the membrane.

This sequence belongs to the G-protein coupled receptor 1 family. Muscarinic acetylcholine receptor subfamily. CHRM4 sub-subfamily.

The protein resides in the cell membrane. It localises to the postsynaptic cell membrane. The muscarinic acetylcholine receptor mediates various cellular responses, including inhibition of adenylate cyclase, breakdown of phosphoinositides and modulation of potassium channels through the action of G proteins. Primary transducing effect is inhibition of adenylate cyclase. This chain is Muscarinic acetylcholine receptor M4 (chrm4), found in Xenopus laevis (African clawed frog).